A 341-amino-acid polypeptide reads, in one-letter code: Hyaluronan and proteoglycan link protein 2 (341 aa).

A signal peptide spans 1-27; that stretch reads MPSWIPLPAFCCLLLPWAFTVFHKTLG. An Ig-like V-type domain is found at 35–143; that stretch reads PHYLLPPIHE…GIEDESVALT (109 aa). 5 disulfides stabilise this stretch: C58–C129, C171–C241, C195–C216, C266–C337, and C291–C312. 2 Link domains span residues 149 to 243 and 246 to 339; these read VVFP…FCFT and LAGQ…YCYA.

This sequence belongs to the HAPLN family. In terms of tissue distribution, brain.

It is found in the secreted. The protein localises to the extracellular space. The protein resides in the extracellular matrix. In terms of biological role, mediates a firm binding of versican V2 to hyaluronic acid. May play a pivotal role in the formation of the hyaluronan-associated matrix in the central nervous system (CNS) which facilitates neuronal conduction and general structural stabilization. Binds to hyaluronic acid. This Rattus norvegicus (Rat) protein is Hyaluronan and proteoglycan link protein 2 (Hapln2).